Consider the following 944-residue polypeptide: Translation initiation factor IF-2 (944 aa).

2 disordered regions span residues 50 to 91 and 114 to 349; these read SAKT…FAGK and KVEV…VPAT. Composition is skewed to basic and acidic residues over residues 75 to 86, 124 to 157, 164 to 185, and 199 to 233; these read ESAKKNKEDHPR, VVTEKPKASEPVKKAEPKVEAKSEPKVEKVETKD, AEVKPENVADKKEPVVTEEKKK, and KRAEDIKKEQAAARPEKKKFDKNRNDRNNRSDNRR. Positions 267 to 280 are enriched in polar residues; it reads SSGSAPATDSFTPA. Basic and acidic residues predominate over residues 286 to 307; that stretch reads SRRDRDRKKSDNNRDNTKDGNR. 2 stretches are compositionally biased toward polar residues: residues 317–331 and 338–348; these read NRNQVRNARNSNWNQ and YQNNQSSSVPA. The tr-type G domain maps to 443–614; the sequence is ERPAVVTIMG…LLVAEVQELK (172 aa). A G1 region spans residues 452 to 459; it reads GHVDHGKT. 452–459 contacts GTP; sequence GHVDHGKT. Residues 477-481 form a G2 region; the sequence is GITQH. A G3 region spans residues 498–501; that stretch reads DTPG. Residues 498-502 and 552-555 each bind GTP; these read DTPGH and NKID. Residues 552–555 form a G4 region; it reads NKID. Residues 590-592 are G5; it reads SAK.

It belongs to the TRAFAC class translation factor GTPase superfamily. Classic translation factor GTPase family. IF-2 subfamily.

The protein localises to the cytoplasm. One of the essential components for the initiation of protein synthesis. Protects formylmethionyl-tRNA from spontaneous hydrolysis and promotes its binding to the 30S ribosomal subunits. Also involved in the hydrolysis of GTP during the formation of the 70S ribosomal complex. This chain is Translation initiation factor IF-2 (infB), found in Lactococcus lactis subsp. lactis (strain IL1403) (Streptococcus lactis).